A 207-amino-acid chain; its full sequence is Putative 3-methyladenine DNA glycosylase (207 aa).

This sequence belongs to the DNA glycosylase MPG family.

This is Putative 3-methyladenine DNA glycosylase from Burkholderia cenocepacia (strain HI2424).